The chain runs to 174 residues: 3-hydroxydecanoyl-[acyl-carrier-protein] dehydratase (174 aa).

Histidine 73 is an active-site residue.

Belongs to the thioester dehydratase family. FabA subfamily. In terms of assembly, homodimer.

It localises to the cytoplasm. The enzyme catalyses a (3R)-hydroxyacyl-[ACP] = a (2E)-enoyl-[ACP] + H2O. It catalyses the reaction (3R)-hydroxydecanoyl-[ACP] = (2E)-decenoyl-[ACP] + H2O. It carries out the reaction (2E)-decenoyl-[ACP] = (3Z)-decenoyl-[ACP]. The protein operates within lipid metabolism; fatty acid biosynthesis. In terms of biological role, necessary for the introduction of cis unsaturation into fatty acids. Catalyzes the dehydration of (3R)-3-hydroxydecanoyl-ACP to E-(2)-decenoyl-ACP and then its isomerization to Z-(3)-decenoyl-ACP. Can catalyze the dehydratase reaction for beta-hydroxyacyl-ACPs with saturated chain lengths up to 16:0, being most active on intermediate chain length. The polypeptide is 3-hydroxydecanoyl-[acyl-carrier-protein] dehydratase (Cellvibrio japonicus (strain Ueda107) (Pseudomonas fluorescens subsp. cellulosa)).